Reading from the N-terminus, the 347-residue chain is S-adenosylmethionine:tRNA ribosyltransferase-isomerase (347 aa).

It belongs to the QueA family. As to quaternary structure, monomer.

It localises to the cytoplasm. It catalyses the reaction 7-aminomethyl-7-carbaguanosine(34) in tRNA + S-adenosyl-L-methionine = epoxyqueuosine(34) in tRNA + adenine + L-methionine + 2 H(+). The protein operates within tRNA modification; tRNA-queuosine biosynthesis. Its function is as follows. Transfers and isomerizes the ribose moiety from AdoMet to the 7-aminomethyl group of 7-deazaguanine (preQ1-tRNA) to give epoxyqueuosine (oQ-tRNA). This chain is S-adenosylmethionine:tRNA ribosyltransferase-isomerase, found in Bordetella parapertussis (strain 12822 / ATCC BAA-587 / NCTC 13253).